Consider the following 430-residue polypeptide: tRNA(Ile)-lysidine synthase (430 aa).

27–32 (SGGSDS) is an ATP binding site.

The protein belongs to the tRNA(Ile)-lysidine synthase family.

The protein localises to the cytoplasm. The catalysed reaction is cytidine(34) in tRNA(Ile2) + L-lysine + ATP = lysidine(34) in tRNA(Ile2) + AMP + diphosphate + H(+). In terms of biological role, ligates lysine onto the cytidine present at position 34 of the AUA codon-specific tRNA(Ile) that contains the anticodon CAU, in an ATP-dependent manner. Cytidine is converted to lysidine, thus changing the amino acid specificity of the tRNA from methionine to isoleucine. The protein is tRNA(Ile)-lysidine synthase of Rickettsia felis (strain ATCC VR-1525 / URRWXCal2) (Rickettsia azadi).